The chain runs to 302 residues: MTILFSMPVHPQPIIDSGHRFDASRHWPASLTLGFAAYPEADTRITRMNVARHYGPLRVQRAFYPEGRDGCCHVYLLHPPGGIASGDSLTIDVTVSENAHALLTTPAANKLYRADSNNVAWTQHTHLKVEDGATLEWLPQETLAFDGSRGEQTVIIDLAETAKCLGWEIIGLGRPASDLPYVSGMIEQRFQLSQKGRPLWLERQAIDPTHPRFLGKWGQGGATVHATLWAVGLSDPADTITELRDKIPANHNWAVTYRRGVLLLRYLGMERNEAWDLLQQAREILRPRLMDVKAVTPRIWLT.

The protein belongs to the UreD family. In terms of assembly, ureD, UreF and UreG form a complex that acts as a GTP-hydrolysis-dependent molecular chaperone, activating the urease apoprotein by helping to assemble the nickel containing metallocenter of UreC. The UreE protein probably delivers the nickel.

The protein localises to the cytoplasm. Required for maturation of urease via the functional incorporation of the urease nickel metallocenter. The protein is Urease accessory protein UreD 1 of Psychrobacter cryohalolentis (strain ATCC BAA-1226 / DSM 17306 / VKM B-2378 / K5).